A 119-amino-acid polypeptide reads, in one-letter code: Phenol 2-monooxygenase, oxygenase component DmpO (119 aa).

The multicomponent enzyme phenol hydroxylase is formed by DmpL (P1 component), DmpM (P2 component), DmpN (P3 component), DmpO (P4 component) and DmpP (P5 component). The oxygenase component is a dimer composed of three subunits, DmpL, DmpN and DmpO (DmpLNO).

It catalyses the reaction phenol + NADH + O2 + H(+) = catechol + NAD(+) + H2O. It functions in the pathway aromatic compound metabolism; phenol degradation. Requires DmpM for efficient turnover. The activity of DmpLNO oxygenase is inhibited by dithiothreitol (DTT) by a mechanism apparently involving H(2)O(2) generation. In terms of biological role, part of a multicomponent enzyme which catalyzes the degradation of phenol and some of its methylated derivatives. DmpL, DmpN and DmpO form the oxygenase component of the complex. Required for growth on phenol and for in vitro phenol hydroxylase activity. The sequence is that of Phenol 2-monooxygenase, oxygenase component DmpO from Pseudomonas sp. (strain CF600).